The following is a 1413-amino-acid chain: DNA-directed RNA polymerase subunit beta' (1413 aa).

Cys-70, Cys-72, Cys-85, and Cys-88 together coordinate Zn(2+). The Mg(2+) site is built by Asp-460, Asp-462, and Asp-464. 4 residues coordinate Zn(2+): Cys-819, Cys-893, Cys-900, and Cys-903.

The protein belongs to the RNA polymerase beta' chain family. The RNAP catalytic core consists of 2 alpha, 1 beta, 1 beta' and 1 omega subunit. When a sigma factor is associated with the core the holoenzyme is formed, which can initiate transcription. Requires Mg(2+) as cofactor. The cofactor is Zn(2+).

The enzyme catalyses RNA(n) + a ribonucleoside 5'-triphosphate = RNA(n+1) + diphosphate. Its function is as follows. DNA-dependent RNA polymerase catalyzes the transcription of DNA into RNA using the four ribonucleoside triphosphates as substrates. The polypeptide is DNA-directed RNA polymerase subunit beta' (Burkholderia multivorans (strain ATCC 17616 / 249)).